The sequence spans 210 residues: Redox-sensing transcriptional repressor Rex (210 aa).

The H-T-H motif DNA-binding region spans 17 to 56; sequence KYHRYLGDLLDRDIQRISSKELSDIIGFTASQIRQDLNNF. NAD(+) is bound at residue 91 to 96; the sequence is GAGNLG.

The protein belongs to the transcriptional regulatory Rex family. In terms of assembly, homodimer.

The protein localises to the cytoplasm. Modulates transcription in response to changes in cellular NADH/NAD(+) redox state. This chain is Redox-sensing transcriptional repressor Rex, found in Clostridioides difficile (strain 630) (Peptoclostridium difficile).